The following is a 143-amino-acid chain: Large ribosomal subunit protein uL11 (143 aa).

Belongs to the universal ribosomal protein uL11 family. In terms of assembly, part of the ribosomal stalk of the 50S ribosomal subunit. Interacts with L10 and the large rRNA to form the base of the stalk. L10 forms an elongated spine to which L12 dimers bind in a sequential fashion forming a multimeric L10(L12)X complex. One or more lysine residues are methylated.

In terms of biological role, forms part of the ribosomal stalk which helps the ribosome interact with GTP-bound translation factors. The protein is Large ribosomal subunit protein uL11 of Methylococcus capsulatus (strain ATCC 33009 / NCIMB 11132 / Bath).